A 65-amino-acid chain; its full sequence is Large ribosomal subunit protein bL35 (65 aa).

2 stretches are compositionally biased toward basic residues: residues 1 to 15 and 26 to 44; these read MPKMKTKKSASKRFT and QAFKRHILTKKTTKNKRQL. Positions 1-65 are disordered; sequence MPKMKTKKSA…KSVRAMMPYA (65 aa).

It belongs to the bacterial ribosomal protein bL35 family.

The chain is Large ribosomal subunit protein bL35 from Ralstonia nicotianae (strain ATCC BAA-1114 / GMI1000) (Ralstonia solanacearum).